We begin with the raw amino-acid sequence, 313 residues long: Putative S-adenosyl-L-methionine-dependent methyltransferase MMAR_0955 (313 aa).

S-adenosyl-L-methionine contacts are provided by residues aspartate 132 and 161 to 162 (DL).

The protein belongs to the UPF0677 family.

Exhibits S-adenosyl-L-methionine-dependent methyltransferase activity. The polypeptide is Putative S-adenosyl-L-methionine-dependent methyltransferase MMAR_0955 (Mycobacterium marinum (strain ATCC BAA-535 / M)).